Reading from the N-terminus, the 617-residue chain is Electron transfer flavoprotein-ubiquinone oxidoreductase, mitochondrial (617 aa).

The N-terminal 33 residues, 1–33 (MQVLLARLACPVYQCFHAIKIKKNYLPLCATRW), are a transit peptide targeting the mitochondrion. Residue 71–85 (VVIVGAGPAGLSAAA) participates in FAD binding. N6-acetyllysine is present on Lys96. An intramembrane segment occupies 109 to 130 (IGAHTLSGACLDPRALQELFPD). An N6-acetyllysine mark is found at Lys132 and Lys223. Gly305 and Gly306 together coordinate a ubiquinone. Residue Lys357 is modified to N6-acetyllysine. The stretch at 428 to 447 (IGLDVTEYEDNLKKSWVWKE) is an intramembrane region. Ser551 carries the post-translational modification Phosphoserine. 4 residues coordinate [4Fe-4S] cluster: Cys561, Cys586, Cys589, and Cys592. One can recognise a 4Fe-4S ferredoxin-type domain in the interval 577-606 (FRLQINAQNCVHCKTCDIKDPSQNINWVVP).

Belongs to the ETF-QO/FixC family. In terms of assembly, monomer. Requires [4Fe-4S] cluster as cofactor. The cofactor is FAD.

The protein resides in the mitochondrion inner membrane. It carries out the reaction a ubiquinone + reduced [electron-transfer flavoprotein] = a ubiquinol + oxidized [electron-transfer flavoprotein] + H(+). Accepts electrons from ETF and reduces ubiquinone. The protein is Electron transfer flavoprotein-ubiquinone oxidoreductase, mitochondrial (ETFDH) of Bos taurus (Bovine).